Here is a 337-residue protein sequence, read N- to C-terminus: Putative 2-aminoethylphosphonate-binding periplasmic protein (337 aa).

Positions 1–21 (MKLSRLALLSVFALASAPSWA) are cleaved as a signal peptide.

It belongs to the bacterial solute-binding protein 1 family.

It is found in the periplasm. Its function is as follows. Probably part of the PhnSTUV complex (TC 3.A.1.11.5) involved in 2-aminoethylphosphonate import. The protein is Putative 2-aminoethylphosphonate-binding periplasmic protein (phnS) of Salmonella paratyphi A (strain ATCC 9150 / SARB42).